A 160-amino-acid chain; its full sequence is MRIGLFAVGRLKSGPEKDLAARYFDRFAKAGPAVGLELTRVAEVAESRASNAETRKREEAAMLLKSLADGSILILLDERGKALDSEAFANLLGSYRDQGKRELTIAIGGADGLDPSLYDRADATLCLGKMTWPHQLVRTLIAEQLYRAVTILSGHPYHRV.

S-adenosyl-L-methionine is bound by residues leucine 76, glycine 108, and 127 to 132; that span reads LGKMTW.

Belongs to the RNA methyltransferase RlmH family. Homodimer.

It localises to the cytoplasm. The enzyme catalyses pseudouridine(1915) in 23S rRNA + S-adenosyl-L-methionine = N(3)-methylpseudouridine(1915) in 23S rRNA + S-adenosyl-L-homocysteine + H(+). Its function is as follows. Specifically methylates the pseudouridine at position 1915 (m3Psi1915) in 23S rRNA. The protein is Ribosomal RNA large subunit methyltransferase H of Rhizobium johnstonii (strain DSM 114642 / LMG 32736 / 3841) (Rhizobium leguminosarum bv. viciae).